The chain runs to 458 residues: Vitamin K-dependent protein C (458 aa).

A signal peptide spans 1-27; the sequence is IPDDVGYRNQKTASKEGVCVVSKCQDG. A propeptide spanning residues 28-36 is cleaved from the precursor; it reads PNTLPRAKR. Residues 37 to 82 enclose the Gla domain; that stretch reads ANSFLEELRPSSLERECVEEVCDLEEAKEIFQSVDDTLAFWYKYVD. Residues Glu42, Glu43, Glu50, Glu52, Glu55, Glu56, Glu61, Glu62, and Glu65 each carry the 4-carboxyglutamate modification. Cys53 and Cys58 are joined by a disulfide. Intrachain disulfides connect Cys86–Cys105, Cys95–Cys100, Cys99–Cys114, and Cys116–Cys125. 2 consecutive EGF-like domains span residues 91–126 and 130–170; these read SEHPCSSQCCGHGTCADSIGGFSCQCHGGWEGSFCQ and RFSN…LQCE. At Asp107 the chain carries (3R)-3-hydroxyaspartate. The N-linked (GlcNAc...) asparagine glycan is linked to Asn133. Disulfide bonds link Cys134–Cys145, Cys141–Cys154, Cys156–Cys169, Cys177–Cys316, and Cys235–Cys251. Residues 210 to 447 form the Peptidase S1 domain; it reads IDGKLTRRGD…YLDWIHSHIE (238 aa). Catalysis depends on His250, which acts as the Charge relay system. Asn287 carries N-linked (GlcNAc...) asparagine glycosylation. The active-site Charge relay system is Asp296. The N-linked (GlcNAc...) asparagine glycan is linked to Asn352. Cystine bridges form between Cys370–Cys384 and Cys395–Cys423. The active-site Charge relay system is Ser399.

This sequence belongs to the peptidase S1 family. In terms of assembly, synthesized as a single chain precursor, which is cleaved into a light chain and a heavy chain held together by a disulfide bond. The enzyme is then activated by thrombin, which cleaves a tetradecapeptide from the amino end of the heavy chain; this reaction, which occurs at the surface of endothelial cells, is strongly promoted by thrombomodulin. Post-translationally, the vitamin K-dependent, enzymatic carboxylation of some Glu residues allows the modified protein to bind calcium. The iron and 2-oxoglutarate dependent 3-hydroxylation of aspartate and asparagine is (R) stereospecific within EGF domains. In terms of tissue distribution, plasma; synthesized in the liver.

It localises to the secreted. The protein localises to the golgi apparatus. Its subcellular location is the endoplasmic reticulum. The enzyme catalyses Degradation of blood coagulation factors Va and VIIIa.. Protein C is a vitamin K-dependent serine protease that regulates blood coagulation by inactivating factors Va and VIIIa in the presence of calcium ions and phospholipids. Exerts a protective effect on the endothelial cell barrier function. The sequence is that of Vitamin K-dependent protein C (PROC) from Oryctolagus cuniculus (Rabbit).